We begin with the raw amino-acid sequence, 328 residues long: Arylacetonitrilase (328 aa).

The 274-residue stretch at 5-278 (VRVAVTQAEP…EGIIYADLDL (274 aa)) folds into the CN hydrolase domain. The active-site Proton acceptor is Glu45. Lys125 is an active-site residue. Cys160 functions as the Nucleophile in the catalytic mechanism.

This sequence belongs to the carbon-nitrogen hydrolase superfamily. Nitrilase family.

The enzyme catalyses a nitrile + 2 H2O = a carboxylate + NH4(+). It catalyses the reaction 4-chlorophenylacetonitrile + 2 H2O = 4-chlorophenylacetate + NH4(+). Functionally, nitrilase that hydrolyzes preferentially phenylacetonitrile and (R,S)-mandelonitrile. Also acts on dinitriles like phenylenediacetonitriles (PDAs) 1,2-PDA, 1,3-PDA, and 1,4-PDA, and cyanophenyl acetonitriles (CPAs) 2-CPA and 4-CPA. The polypeptide is Arylacetonitrilase (nit2) (Aspergillus kawachii (strain NBRC 4308) (White koji mold)).